We begin with the raw amino-acid sequence, 342 residues long: Growth hormone-regulated TBC protein 1 (342 aa).

Residues 72 to 263 (GIPNEHRSHV…RIWDCLFFEG (192 aa)) enclose the Rab-GAP TBC domain.

May act as a GTPase-activating protein for Rab family protein(s). The sequence is that of Growth hormone-regulated TBC protein 1 (grtp1) from Xenopus tropicalis (Western clawed frog).